Here is a 609-residue protein sequence, read N- to C-terminus: NADH-ubiquinone oxidoreductase chain 5 (609 aa).

Transmembrane regions (helical) follow at residues Val3–Val23, Thr41–Gly61, Met90–Tyr110, Pro115–Val135, Leu140–Trp160, Ala174–Ile194, Val214–Leu236, Thr244–Ile264, Met276–Leu296, Ile304–Asn323, Ala328–Ile350, Val368–Phe388, Trp410–Phe432, Leu460–Thr480, Leu491–Ser511, and Gly585–Ile605.

It belongs to the complex I subunit 5 family. As to quaternary structure, core subunit of respiratory chain NADH dehydrogenase (Complex I) which is composed of 45 different subunits.

The protein localises to the mitochondrion inner membrane. The catalysed reaction is a ubiquinone + NADH + 5 H(+)(in) = a ubiquinol + NAD(+) + 4 H(+)(out). Core subunit of the mitochondrial membrane respiratory chain NADH dehydrogenase (Complex I) which catalyzes electron transfer from NADH through the respiratory chain, using ubiquinone as an electron acceptor. Essential for the catalytic activity and assembly of complex I. This is NADH-ubiquinone oxidoreductase chain 5 (MT-ND5) from Halichoerus grypus (Gray seal).